We begin with the raw amino-acid sequence, 350 residues long: tRNA N6-adenosine threonylcarbamoyltransferase (350 aa).

Residues His109 and His113 each contribute to the Fe cation site. Substrate contacts are provided by residues 136–140 (TVSGG), Asp169, Gly182, Asp186, and Asn284. Asp312 is a binding site for Fe cation.

This sequence belongs to the KAE1 / TsaD family. Fe(2+) serves as cofactor.

Its subcellular location is the cytoplasm. It carries out the reaction L-threonylcarbamoyladenylate + adenosine(37) in tRNA = N(6)-L-threonylcarbamoyladenosine(37) in tRNA + AMP + H(+). In terms of biological role, required for the formation of a threonylcarbamoyl group on adenosine at position 37 (t(6)A37) in tRNAs that read codons beginning with adenine. Is involved in the transfer of the threonylcarbamoyl moiety of threonylcarbamoyl-AMP (TC-AMP) to the N6 group of A37, together with TsaE and TsaB. TsaD likely plays a direct catalytic role in this reaction. This Pelodictyon phaeoclathratiforme (strain DSM 5477 / BU-1) protein is tRNA N6-adenosine threonylcarbamoyltransferase.